The primary structure comprises 725 residues: Prolyl 3-hydroxylase 1 (725 aa).

A signal peptide spans methionine 1–alanine 14. The stretch at proline 36–isoleucine 69 is one TPR 1 repeat. Asparagine 82 is a glycosylation site (N-linked (GlcNAc...) asparagine). 3 TPR repeats span residues arginine 136–histidine 169, histidine 198–alanine 231, and proline 294–aspartate 327. Residues lysine 394 to glutamate 441 adopt a coiled-coil conformation. Residues asparagine 460 and asparagine 533 are each glycosylated (N-linked (GlcNAc...) asparagine). Residues serine 557–leucine 671 enclose the Fe2OG dioxygenase domain. Residues histidine 580, aspartate 582, and histidine 652 each contribute to the Fe cation site. Residue arginine 662 is part of the active site. The segment covering glutamate 701 to alanine 715 has biased composition (polar residues). Residues glutamate 701–leucine 725 are disordered. A Prevents secretion from ER motif is present at residues lysine 722–leucine 725.

This sequence belongs to the leprecan family. In terms of assembly, binds unfolded collagen in a complex with CYPB and CRTAP. Fe cation serves as cofactor. It depends on L-ascorbate as a cofactor. Expressed in embryonic dermis, tendon, cartilage, liver and kidney. Expression in the kidney is restricted to the calyx. In the liver, expression is restricted to the interlobular septum.

The protein resides in the endoplasmic reticulum. The enzyme catalyses L-prolyl-[collagen] + 2-oxoglutarate + O2 = trans-3-hydroxy-L-prolyl-[collagen] + succinate + CO2. Its function is as follows. Has prolyl 3-hydroxylase activity catalyzing the post-translational formation of 3-hydroxyproline in -Xaa-Pro-Gly-sequences in collagens, especially types IV and V. May be involved in the secretoty pathway of cells. Has growth suppressive activity in fibroblasts. This chain is Prolyl 3-hydroxylase 1, found in Gallus gallus (Chicken).